The following is a 184-amino-acid chain: UPF0316 protein BLi00691/BL01474 (184 aa).

3 consecutive transmembrane segments (helical) span residues Gly9–Leu29, Leu41–Leu61, and Ile67–Ile87.

This sequence belongs to the UPF0316 family.

The protein resides in the cell membrane. This is UPF0316 protein BLi00691/BL01474 from Bacillus licheniformis (strain ATCC 14580 / DSM 13 / JCM 2505 / CCUG 7422 / NBRC 12200 / NCIMB 9375 / NCTC 10341 / NRRL NRS-1264 / Gibson 46).